Reading from the N-terminus, the 317-residue chain is Transaldolase (317 aa).

K132 (schiff-base intermediate with substrate) is an active-site residue.

This sequence belongs to the transaldolase family. Type 1 subfamily. In terms of assembly, homodimer.

The protein localises to the cytoplasm. It carries out the reaction D-sedoheptulose 7-phosphate + D-glyceraldehyde 3-phosphate = D-erythrose 4-phosphate + beta-D-fructose 6-phosphate. The protein operates within carbohydrate degradation; pentose phosphate pathway; D-glyceraldehyde 3-phosphate and beta-D-fructose 6-phosphate from D-ribose 5-phosphate and D-xylulose 5-phosphate (non-oxidative stage): step 2/3. Functionally, transaldolase is important for the balance of metabolites in the pentose-phosphate pathway. This chain is Transaldolase, found in Yersinia enterocolitica serotype O:8 / biotype 1B (strain NCTC 13174 / 8081).